The primary structure comprises 28 residues: Dermaseptin-SP1 (28 aa).

As to expression, expressed by the skin glands.

Its subcellular location is the secreted. Functionally, probable antimicrobial peptide which stimulates insulin-release in glucose-responsive BRIN-BD 11 cells. In Agalychnis spurrelli (Gliding leaf frog), this protein is Dermaseptin-SP1.